A 136-amino-acid chain; its full sequence is 1,4-dihydroxy-2-naphthoyl-CoA hydrolase (136 aa).

Residue glutamate 63 is the Nucleophile or proton acceptor of the active site. Residues glycine 82, histidine 89–serine 92, and histidine 106–histidine 111 each bind substrate.

It belongs to the thioesterase PaaI family. As to quaternary structure, homotetramer. Dimer of dimers.

It carries out the reaction 1,4-dihydroxy-2-naphthoyl-CoA + H2O = 1,4-dihydroxy-2-naphthoate + CoA + H(+). It participates in quinol/quinone metabolism; 1,4-dihydroxy-2-naphthoate biosynthesis; 1,4-dihydroxy-2-naphthoate from chorismate: step 7/7. The protein operates within quinol/quinone metabolism; menaquinone biosynthesis. Functionally, catalyzes the hydrolysis of 1,4-dihydroxy-2-naphthoyl-CoA (DHNA-CoA) to 1,4-dihydroxy-2-naphthoate (DHNA). Also shows significant activity toward a wide range of acyl-CoA thioesters, and minimal activity toward benzoyl-holoEntB. This chain is 1,4-dihydroxy-2-naphthoyl-CoA hydrolase, found in Escherichia coli (strain K12).